Consider the following 954-residue polypeptide: Valine--tRNA ligase (954 aa).

A 'HIGH' region motif is present at residues 48–58; the sequence is PNVTGSLHMGH. Positions 560-564 match the 'KMSKS' region motif; sequence KMSKS. ATP is bound at residue lysine 563. A coiled-coil region spans residues 886-954; the sequence is INKDTELARL…RAQYLSIENL (69 aa).

Belongs to the class-I aminoacyl-tRNA synthetase family. ValS type 1 subfamily. In terms of assembly, monomer.

The protein resides in the cytoplasm. It carries out the reaction tRNA(Val) + L-valine + ATP = L-valyl-tRNA(Val) + AMP + diphosphate. Functionally, catalyzes the attachment of valine to tRNA(Val). As ValRS can inadvertently accommodate and process structurally similar amino acids such as threonine, to avoid such errors, it has a 'posttransfer' editing activity that hydrolyzes mischarged Thr-tRNA(Val) in a tRNA-dependent manner. This is Valine--tRNA ligase from Mannheimia succiniciproducens (strain KCTC 0769BP / MBEL55E).